Reading from the N-terminus, the 340-residue chain is Guanine nucleotide-binding protein G(I)/G(S)/G(T) subunit beta-3 (340 aa).

WD repeat units lie at residues 53-83 (GHLAKIYAMHWATDSKLLVSASQDGKLIVWD), 95-125 (LRSSWVMTCAYAPSGNFVACGGLDNMCSIYN), 141-170 (AHTGYLSCCRFLDDNNIVTSSGDTTCALWD), 182-212 (GHTGDCMSLAVSPDFNLFISGACDASAKLWD), 224-254 (GHESDINAICFFPNGEAICTGSDDASCRLFD), 268-298 (SIICGITSVAFSLSGRLLFAGYDDFNCNVWD), and 310-340 (GHDNRVSCLGVTADGMAVATGSWDSFLKIWN).

The protein belongs to the WD repeat G protein beta family. In terms of assembly, g proteins are composed of 3 units, alpha, beta and gamma. Interacts with RASD2.

In terms of biological role, guanine nucleotide-binding proteins (G proteins) are involved as a modulator or transducer in various transmembrane signaling systems. The beta and gamma chains are required for the GTPase activity, for replacement of GDP by GTP, and for G protein-effector interaction. The chain is Guanine nucleotide-binding protein G(I)/G(S)/G(T) subunit beta-3 (GNB3) from Homo sapiens (Human).